Reading from the N-terminus, the 248-residue chain is 2,3-bisphosphoglycerate-dependent phosphoglycerate mutase (248 aa).

Residues 8 to 15, 21 to 22, arginine 60, 87 to 90, lysine 98, 114 to 115, and 183 to 184 contribute to the substrate site; these read RHGESTWN, TG, ERHY, RR, and GN. The Tele-phosphohistidine intermediate role is filled by histidine 9. The active-site Proton donor/acceptor is glutamate 87.

It belongs to the phosphoglycerate mutase family. BPG-dependent PGAM subfamily. In terms of assembly, homodimer.

It catalyses the reaction (2R)-2-phosphoglycerate = (2R)-3-phosphoglycerate. Its pathway is carbohydrate degradation; glycolysis; pyruvate from D-glyceraldehyde 3-phosphate: step 3/5. Functionally, catalyzes the interconversion of 2-phosphoglycerate and 3-phosphoglycerate. The polypeptide is 2,3-bisphosphoglycerate-dependent phosphoglycerate mutase (Ralstonia nicotianae (strain ATCC BAA-1114 / GMI1000) (Ralstonia solanacearum)).